Reading from the N-terminus, the 682-residue chain is Serine/threonine-protein kinase PAK 6 (682 aa).

Disordered stretches follow at residues 1-30 (MFRK…DPKE), 132-170 (SPQS…QALP), 200-256 (LQSS…QESS), and 270-367 (PATG…NLYL). The region spanning 12 to 25 (ISAPQNFQHRVHTS) is the CRIB domain. Residues 26 to 407 (FDPKEGKFVG…VVDQGDPRLL (382 aa)) are linker. 2 stretches are compositionally biased toward polar residues: residues 270–279 (PATGAASSSK) and 297–334 (KDSS…QKSL). Residues 408–659 (LDSYVKIGEG…AQELLDHPFL (252 aa)) form the Protein kinase domain. ATP-binding positions include 414–422 (IGEGSTGIV) and Lys437. The active-site Proton acceptor is the Asp527. Ser561 is subject to Phosphoserine; by autocatalysis.

The protein belongs to the protein kinase superfamily. STE Ser/Thr protein kinase family. STE20 subfamily. As to quaternary structure, interacts tightly with GTP-bound but not GDP-bound CDC42/p21 and RAC1. Interacts with the androgen receptor AR. Interacts with IQGAP1 and PPM1B. Post-translationally, autophosphorylated. Phosphorylated by MAP2K6/MAPKK6, leading to PAK6 activation.

The protein resides in the cytoplasm. Its subcellular location is the nucleus. It catalyses the reaction L-seryl-[protein] + ATP = O-phospho-L-seryl-[protein] + ADP + H(+). It carries out the reaction L-threonyl-[protein] + ATP = O-phospho-L-threonyl-[protein] + ADP + H(+). Its function is as follows. Serine/threonine protein kinase that plays a role in the regulation of gene transcription. The kinase activity is induced by various effectors including AR or MAP2K6/MAPKK6. Phosphorylates the DNA-binding domain of androgen receptor/AR and thereby inhibits AR-mediated transcription. Also inhibits ESR1-mediated transcription. May play a role in cytoskeleton regulation by interacting with IQGAP1. May protect cells from apoptosis through phosphorylation of BAD. This chain is Serine/threonine-protein kinase PAK 6 (Pak6), found in Mus musculus (Mouse).